The chain runs to 549 residues: MKNINPTQTAAWQALQKHFDEMKDVTIADLFAKDGDRFSKFSATFGDQMLVDYSKNRITEETLAKLQDLAKECDLAGAIKSMFSGEKINRTENRAVLHVALRNRSNTPILVDGKDVMPEVNAVLEKMKTFSEAIISGEWKGYTGKAITDVVNIGIGGSDLGPYMVTEALRPYKNHLNMHFVSNVDGTHIAEVLKKVNPETTLFLVASKTFTTQETMTNAHSARDWFLKAAGDEKHVAKHFAALSTNAKAVGEFGIDTANMFEFWDWVGGRYSLWSAIGLSIVLSIGFDNFVELLSGAHAMDKHFSTTPAEKNLPVLLALIGIWYNNFFGAETEAILPYDQYMHRFAAYFQQGNMESNGKYVDRNGNVVDYQTGPIIWGEPGTNGQHAFYQLIHQGTKMVPCDFIAPAITHNPLSDHHQKLLSNFFAQTEALAFGKSREVVEQEYRDQGKDPATLDYVVPFKVFEGNRPTNSILLREITPFSLGALIALYEHKIFTQGVILNIFTFDQWGVELGKQLANRILPELKDDKEISSHDSSTNGLINRYKAWRG.

N6-acetyllysine is present on residues Lys80, Lys228, and Lys234. Glu355 serves as the catalytic Proton donor. Residues His386 and Lys514 contribute to the active site.

Belongs to the GPI family.

The protein localises to the cytoplasm. It catalyses the reaction alpha-D-glucose 6-phosphate = beta-D-fructose 6-phosphate. The protein operates within carbohydrate biosynthesis; gluconeogenesis. It participates in carbohydrate degradation; glycolysis; D-glyceraldehyde 3-phosphate and glycerone phosphate from D-glucose: step 2/4. Functionally, catalyzes the reversible isomerization of glucose-6-phosphate to fructose-6-phosphate. The polypeptide is Glucose-6-phosphate isomerase (Escherichia coli O139:H28 (strain E24377A / ETEC)).